A 764-amino-acid chain; its full sequence is Plasma membrane fusion protein prm-1 (764 aa).

Over 1 to 61 (MVYNEKNGGG…YLGLRARLSQ (61 aa)) the chain is Extracellular. Residues 62 to 82 (LWFNRWTILLILVLIRVIILT) form a helical membrane-spanning segment. Residues 83–149 (ANLKENLGDA…LKMILTGVQA (67 aa)) are Cytoplasmic-facing. Residues 150–170 (IIMFVINMYIGTFACLVAAFI) form a helical membrane-spanning segment. The Extracellular portion of the chain corresponds to 171–334 (HGGLHVATAV…SLITLVYKAK (164 aa)). Asn-271 and Asn-315 each carry an N-linked (GlcNAc...) asparagine glycan. The helical transmembrane segment at 335-355 (IAFLVVIIILALLAIFVMGYI) threads the bilayer. Topologically, residues 356 to 424 (EYRGFKRERE…AFAYATSLPA (69 aa)) are cytoplasmic. Residues 425 to 445 (LFVLSLAVAGMLSCLFQWVLL) form a helical membrane-spanning segment. Topologically, residues 446-624 (RQIEKKAPEL…NGVIQEALIT (179 aa)) are extracellular. N-linked (GlcNAc...) asparagine glycosylation is found at Asn-479, Asn-508, and Asn-527. The chain crosses the membrane as a helical span at residues 625 to 645 (LGLFLTYVIVVLIGVMGALIG). Topologically, residues 646-764 (WATPGKTRGE…EKVPGYFTPI (119 aa)) are cytoplasmic. Disordered regions lie at residues 653–701 (RGEG…GGGG) and 735–754 (HQRT…PHGD).

It belongs to the PRM1 family.

It is found in the cell membrane. Functionally, involved in cell fusion during mating by stabilizing the plasma membrane fusion event. The sequence is that of Plasma membrane fusion protein prm-1 (prm-1) from Neurospora crassa (strain ATCC 24698 / 74-OR23-1A / CBS 708.71 / DSM 1257 / FGSC 987).